We begin with the raw amino-acid sequence, 288 residues long: Energy-coupling factor transporter ATP-binding protein EcfA2 (288 aa).

The ABC transporter domain maps to 3–245; that stretch reads IKIENLTHVY…VDTLESVGLA (243 aa). 40–47 lines the ATP pocket; it reads GHTGSGKS.

It belongs to the ABC transporter superfamily. Energy-coupling factor EcfA family. In terms of assembly, forms a stable energy-coupling factor (ECF) transporter complex composed of 2 membrane-embedded substrate-binding proteins (S component), 2 ATP-binding proteins (A component) and 2 transmembrane proteins (T component).

It localises to the cell membrane. Its function is as follows. ATP-binding (A) component of a common energy-coupling factor (ECF) ABC-transporter complex. Unlike classic ABC transporters this ECF transporter provides the energy necessary to transport a number of different substrates. This Clostridium tetani (strain Massachusetts / E88) protein is Energy-coupling factor transporter ATP-binding protein EcfA2.